Reading from the N-terminus, the 302-residue chain is Proline dehydrogenase 1 (302 aa).

Lys95 serves as a coordination point for substrate. Asp129 is an active-site residue. FAD is bound by residues Met130 and Gln158. Residue Arg179 is part of the active site. FAD-binding positions include 182 to 184 and 221 to 222; these read KGA and TH. Residue 283-284 coordinates substrate; it reads RR.

It belongs to the proline dehydrogenase family. It depends on FAD as a cofactor.

The enzyme catalyses L-proline + a quinone = (S)-1-pyrroline-5-carboxylate + a quinol + H(+). Its pathway is amino-acid degradation; L-proline degradation into L-glutamate; L-glutamate from L-proline: step 1/2. In terms of biological role, converts proline to delta-1-pyrroline-5-carboxylate. This chain is Proline dehydrogenase 1 (fadM), found in Bacillus subtilis (strain 168).